Here is a 195-residue protein sequence, read N- to C-terminus: Protein GrpE (195 aa).

It belongs to the GrpE family. As to quaternary structure, homodimer.

The protein localises to the cytoplasm. Participates actively in the response to hyperosmotic and heat shock by preventing the aggregation of stress-denatured proteins, in association with DnaK and GrpE. It is the nucleotide exchange factor for DnaK and may function as a thermosensor. Unfolded proteins bind initially to DnaJ; upon interaction with the DnaJ-bound protein, DnaK hydrolyzes its bound ATP, resulting in the formation of a stable complex. GrpE releases ADP from DnaK; ATP binding to DnaK triggers the release of the substrate protein, thus completing the reaction cycle. Several rounds of ATP-dependent interactions between DnaJ, DnaK and GrpE are required for fully efficient folding. This Francisella tularensis subsp. holarctica (strain OSU18) protein is Protein GrpE.